Reading from the N-terminus, the 874-residue chain is Coatomer subunit gamma-1 (874 aa).

Over residues 1-11 (MLKKFDKKDEE) the composition is skewed to basic and acidic residues. The segment at 1 to 21 (MLKKFDKKDEESGGGSNPLQH) is disordered. 4 HEAT repeats span residues 64–101 (TEAT…IAED), 283–320 (KELA…KHPS), 322–355 (VTAC…GSES), and 356–392 (SIDR…KYPR). Threonine 594 carries the phosphothreonine modification. Positions 609–874 (RQEIFQEQLA…PVDIILASVG (266 aa)) are interaction with ZNF289/ARFGAP2.

This sequence belongs to the COPG family. As to quaternary structure, oligomeric complex that consists of at least the alpha, beta, beta', gamma, delta, epsilon and zeta subunits. Interacts with ZNF289/ARFGAP2 through its C-terminal appendage domain. Interacts with EGFR upon EGF treatment; interaction is essential for regulation of EGF-dependent nuclear transport of EGFR by retrograde trafficking from the Golgi to the ER. The coatomer interacts with KDEL receptors; the interaction is important for retrograde trafficking of KDEL-bearing proteins from the Golgi to the endoplasmic reticulum. Interacts with COPB1. Interacts with TMED10 (via C-terminus). Interacts with TMED2, TMED3, TMED7 and TMED9.

The protein resides in the cytoplasm. It is found in the cytosol. The protein localises to the golgi apparatus membrane. Its subcellular location is the cytoplasmic vesicle. It localises to the COPI-coated vesicle membrane. The coatomer is a cytosolic protein complex that binds to dilysine motifs and reversibly associates with Golgi non-clathrin-coated vesicles, which further mediate biosynthetic protein transport from the ER, via the Golgi up to the trans Golgi network. Coatomer complex is required for budding from Golgi membranes, and is essential for the retrograde Golgi-to-ER transport of dilysine-tagged proteins. In mammals, the coatomer can only be recruited by membranes associated to ADP-ribosylation factors (ARFs), which are small GTP-binding proteins; the complex also influences the Golgi structural integrity, as well as the processing, activity, and endocytic recycling of LDL receptors. Required for limiting lipid storage in lipid droplets. Involved in lipid homeostasis by regulating the presence of perilipin family members PLIN2 and PLIN3 at the lipid droplet surface and promoting the association of adipocyte triglyceride lipase (PNPLA2) with the lipid droplet surface to mediate lipolysis. In Rattus norvegicus (Rat), this protein is Coatomer subunit gamma-1 (Copg1).